The primary structure comprises 287 residues: Protease HtpX (287 aa).

2 consecutive transmembrane segments (helical) span residues 4–24 (IFLLIATNMAILLVASIVMSI) and 33–53 (GGLLVFAAIFGFGGAFISLAI). His-139 contacts Zn(2+). The active site involves Glu-140. Position 143 (His-143) interacts with Zn(2+). 2 helical membrane passes run 154–174 (LIQGVVNTFVIFAARVVAGII) and 195–215 (AVVFVLDMLFGILASMIVAYF). Residue Glu-220 participates in Zn(2+) binding.

It belongs to the peptidase M48B family. Zn(2+) serves as cofactor.

The protein localises to the cell inner membrane. The polypeptide is Protease HtpX (Shewanella pealeana (strain ATCC 700345 / ANG-SQ1)).